Consider the following 219-residue polypeptide: Orotate phosphoribosyltransferase (219 aa).

Lysine 26 lines the 5-phospho-alpha-D-ribose 1-diphosphate pocket. 34–35 (FF) is a binding site for orotate. 5-phospho-alpha-D-ribose 1-diphosphate is bound by residues 72–73 (YK), arginine 98, lysine 99, lysine 102, histidine 104, and 124–132 (DDVITAGTA). Orotate is bound by residues threonine 128 and arginine 156.

It belongs to the purine/pyrimidine phosphoribosyltransferase family. PyrE subfamily. Homodimer. The cofactor is Mg(2+).

The catalysed reaction is orotidine 5'-phosphate + diphosphate = orotate + 5-phospho-alpha-D-ribose 1-diphosphate. The protein operates within pyrimidine metabolism; UMP biosynthesis via de novo pathway; UMP from orotate: step 1/2. Its function is as follows. Catalyzes the transfer of a ribosyl phosphate group from 5-phosphoribose 1-diphosphate to orotate, leading to the formation of orotidine monophosphate (OMP). In Stenotrophomonas maltophilia (strain K279a), this protein is Orotate phosphoribosyltransferase.